The sequence spans 400 residues: Phosphoglycerate kinase (400 aa).

Substrate is bound by residues 23–25 (DLN), R38, 61–64 (HFGR), R120, and R153. ATP contacts are provided by residues K203, E325, and 355–358 (GGDT).

This sequence belongs to the phosphoglycerate kinase family. As to quaternary structure, monomer.

It localises to the cytoplasm. The enzyme catalyses (2R)-3-phosphoglycerate + ATP = (2R)-3-phospho-glyceroyl phosphate + ADP. The protein operates within carbohydrate degradation; glycolysis; pyruvate from D-glyceraldehyde 3-phosphate: step 2/5. This chain is Phosphoglycerate kinase, found in Rhizobium leguminosarum bv. trifolii (strain WSM2304).